Consider the following 241-residue polypeptide: Carboxy-S-adenosyl-L-methionine synthase (241 aa).

S-adenosyl-L-methionine is bound by residues Tyr38, 63-65 (GCS), 88-89 (DN), 116-117 (DI), Asn131, and Arg198.

Belongs to the class I-like SAM-binding methyltransferase superfamily. Cx-SAM synthase family. Homodimer.

The enzyme catalyses prephenate + S-adenosyl-L-methionine = carboxy-S-adenosyl-L-methionine + 3-phenylpyruvate + H2O. Its function is as follows. Catalyzes the conversion of S-adenosyl-L-methionine (SAM) to carboxy-S-adenosyl-L-methionine (Cx-SAM). The protein is Carboxy-S-adenosyl-L-methionine synthase of Haemophilus influenzae (strain ATCC 51907 / DSM 11121 / KW20 / Rd).